The primary structure comprises 106 residues: MALAARRKVRIRLYGTNPADVDQVAREIVDLAKKMGVQVRGPIPLPTRRLVVTVRRAPSGQGYHTYDHWEMRISKRLIDIEASERVLRRLMTIRVPDTVKIELQLI.

This sequence belongs to the universal ribosomal protein uS10 family. Part of the 30S ribosomal subunit.

Functionally, involved in the binding of tRNA to the ribosomes. In Pyrobaculum arsenaticum (strain DSM 13514 / JCM 11321 / PZ6), this protein is Small ribosomal subunit protein uS10.